The sequence spans 154 residues: 6,7-dimethyl-8-ribityllumazine synthase (154 aa).

5-amino-6-(D-ribitylamino)uracil contacts are provided by residues phenylalanine 24, 56–58, and 80–82; these read SFE and AVV. Position 85–86 (85–86) interacts with (2S)-2-hydroxy-3-oxobutyl phosphate; that stretch reads ET. The Proton donor role is filled by histidine 88. Phenylalanine 113 serves as a coordination point for 5-amino-6-(D-ribitylamino)uracil. Arginine 127 lines the (2S)-2-hydroxy-3-oxobutyl phosphate pocket.

The protein belongs to the DMRL synthase family.

The enzyme catalyses (2S)-2-hydroxy-3-oxobutyl phosphate + 5-amino-6-(D-ribitylamino)uracil = 6,7-dimethyl-8-(1-D-ribityl)lumazine + phosphate + 2 H2O + H(+). Its pathway is cofactor biosynthesis; riboflavin biosynthesis; riboflavin from 2-hydroxy-3-oxobutyl phosphate and 5-amino-6-(D-ribitylamino)uracil: step 1/2. In terms of biological role, catalyzes the formation of 6,7-dimethyl-8-ribityllumazine by condensation of 5-amino-6-(D-ribitylamino)uracil with 3,4-dihydroxy-2-butanone 4-phosphate. This is the penultimate step in the biosynthesis of riboflavin. This chain is 6,7-dimethyl-8-ribityllumazine synthase, found in Thermococcus gammatolerans (strain DSM 15229 / JCM 11827 / EJ3).